A 242-amino-acid chain; its full sequence is High mobility group protein homolog (242 aa).

2 consecutive DNA-binding regions (HMG box) follow at residues 54-122 (PKRN…EANK) and 126-197 (KPVK…IDKE).

The protein resides in the host nucleus. The chain is High mobility group protein homolog (EF1) from Acheta domesticus (House cricket).